The chain runs to 118 residues: Small ribosomal subunit protein uS13 (118 aa).

A disordered region spans residues 94–118; that stretch reads SLPLRGQRTKTNARTRKGPRKPIKR.

Belongs to the universal ribosomal protein uS13 family. Part of the 30S ribosomal subunit. Forms a loose heterodimer with protein S19. Forms two bridges to the 50S subunit in the 70S ribosome.

Located at the top of the head of the 30S subunit, it contacts several helices of the 16S rRNA. In the 70S ribosome it contacts the 23S rRNA (bridge B1a) and protein L5 of the 50S subunit (bridge B1b), connecting the 2 subunits; these bridges are implicated in subunit movement. Contacts the tRNAs in the A and P-sites. This is Small ribosomal subunit protein uS13 from Pseudoalteromonas translucida (strain TAC 125).